A 469-amino-acid polypeptide reads, in one-letter code: MSYSAADNLQDSFQRAMNFSGSPGAVSTSPTQSFMNTLPRRVSITKQPKALKPFSTGDMNILLLENVNATAIKIFKDQGYQVEFHKSSLPEDELIEKIKDVHAIGIRSKTRLTEKILQHARNLVCIGCFCIGTNQVDLKYAASKGIAVFNSPFSNSRSVAELVIGEIISLARQLGDRSIELHTGTWNKVAARCWEVRGKTLGIIGYGHIGSQLSVLAEAMGLHVLYYDIVTIMALGTARQVSTLDELLNKSDFVTLHVPATPETEKMLSAPQFAAMKDGAYVINASRGTVVDIPSLIQAVKANKIAGAALDVYPHEPAKNGEGSFNDELNSWTSELVSLPNIILTPHIGGSTEEAQSSIGIEVATALSKYINEGNSVGSVNFPEVSLKSLDYDQENTVRVLYIHRNVPGVLKTVNDILSDHNIEKQFSDSHGEIAYLMADISSVNQSEIKDIYEKLNQTSAKVSIRLLY.

Serine 2 carries the N-acetylserine modification. A phosphoserine mark is found at serine 22, serine 29, and serine 33. NAD(+) is bound by residues 208-209 (HI), aspartate 228, 285-287 (ASR), and aspartate 311. Arginine 287 is a catalytic residue. The active site involves glutamate 316. Histidine 347 functions as the Proton donor in the catalytic mechanism. 347-350 (HIGG) provides a ligand contact to NAD(+). One can recognise an ACT domain in the interval 399-469 (RVLYIHRNVP…SAKVSIRLLY (71 aa)).

The protein belongs to the D-isomer specific 2-hydroxyacid dehydrogenase family.

The enzyme catalyses (2R)-3-phosphoglycerate + NAD(+) = 3-phosphooxypyruvate + NADH + H(+). The catalysed reaction is (R)-2-hydroxyglutarate + NAD(+) = 2-oxoglutarate + NADH + H(+). It participates in amino-acid biosynthesis; L-serine biosynthesis; L-serine from 3-phospho-D-glycerate: step 1/3. Catalyzes the reversible oxidation of 3-phospho-D-glycerate to 3-phosphonooxypyruvate, the first step of the phosphorylated L-serine biosynthesis pathway. Also catalyzes the reversible oxidation of 2-hydroxyglutarate to 2-oxoglutarate. The polypeptide is D-3-phosphoglycerate dehydrogenase 2 (SER33) (Saccharomyces cerevisiae (strain ATCC 204508 / S288c) (Baker's yeast)).